The following is a 72-amino-acid chain: MAKEDCIEMQGTILETLPNTMFRVELENGHVVTAHISGKMRKNYIRILTGDKVTVEMTPYDLSKARIIFRAR.

The S1-like domain maps to Met-1–Arg-72.

This sequence belongs to the IF-1 family. Component of the 30S ribosomal translation pre-initiation complex which assembles on the 30S ribosome in the order IF-2 and IF-3, IF-1 and N-formylmethionyl-tRNA(fMet); mRNA recruitment can occur at any time during PIC assembly.

The protein resides in the cytoplasm. In terms of biological role, one of the essential components for the initiation of protein synthesis. Stabilizes the binding of IF-2 and IF-3 on the 30S subunit to which N-formylmethionyl-tRNA(fMet) subsequently binds. Helps modulate mRNA selection, yielding the 30S pre-initiation complex (PIC). Upon addition of the 50S ribosomal subunit IF-1, IF-2 and IF-3 are released leaving the mature 70S translation initiation complex. The polypeptide is Translation initiation factor IF-1 (Actinobacillus pleuropneumoniae serotype 5b (strain L20)).